The chain runs to 319 residues: Polyprenal reductase (319 aa).

The Cytoplasmic portion of the chain corresponds to 1-12 (MQLVQLLPPGVS). A helical transmembrane segment spans residues 13 to 33 (LLALVWLAVDAAFLTALLLYL). Residues 34 to 79 (QRGCDSGRSLLCSVFQDLIRYGKTKSGLRRPSWLQWFDIPKRCFWH) lie on the Lumenal side of the membrane. Residues 80–100 (FYFVSLVWNGFLLWILLHLLL) form a helical membrane-spanning segment. The Cytoplasmic segment spans residues 101–122 (QSVPVPEWLQAVLQFLCAGSEP). A helical transmembrane segment spans residues 123 to 143 (QVLGGELSVVLAFSLLWLHSL). The Lumenal portion of the chain corresponds to 144–158 (RRLLECLFVSIFSNG). Residues 159 to 179 (VIHFVQYCFGLGYYILIGFTI) form a helical membrane-spanning segment. Residues 180–195 (LGYCPLDRRTAVSLDD) lie on the Cytoplasmic side of the membrane. A helical membrane pass occupies residues 196 to 216 (LLMQGNWYHILGLTLYVWASL). The Lumenal segment spans residues 217 to 266 (HQYTCHCILADLRKSASGAIINLKHAVPTGDWFEKVSCPHYFAELLIYLS). A helical transmembrane segment spans residues 267–287 (IAVVFGLLNTIWWLVVLYVLL). Over 288 to 319 (SQALAAVLCHEFYHEKFDSYPIHRKAFIPLIF) the chain is Cytoplasmic.

It belongs to the steroid 5-alpha reductase family. Polyprenal reductase subfamily.

The protein localises to the endoplasmic reticulum membrane. The enzyme catalyses a di-trans,poly-cis-dolichal + NADP(+) = a di-trans,poly-cis-polyprenal + NADPH + H(+). It carries out the reaction a 3-oxo-5alpha-steroid + NADP(+) = a 3-oxo-Delta(4)-steroid + NADPH + H(+). The catalysed reaction is androst-4-ene-3,17-dione + NADPH + H(+) = 5alpha-androstan-3,17-dione + NADP(+). It catalyses the reaction 17beta-hydroxy-5alpha-androstan-3-one + NADP(+) = testosterone + NADPH + H(+). Its pathway is protein modification; protein glycosylation. Plays a key role in early steps of protein N-linked glycosylation by being involved in the conversion of polyprenol into dolichol. Acts as a polyprenal reductase that mediates the reduction of polyprenal into dolichal in a NADP-dependent mechanism. Dolichols are required for the synthesis of dolichol-linked monosaccharides and the oligosaccharide precursor used for N-glycosylation. Also able to convert testosterone (T) into 5-alpha-dihydrotestosterone (DHT). The chain is Polyprenal reductase (srd5a3) from Xenopus laevis (African clawed frog).